Reading from the N-terminus, the 775-residue chain is K(+)-insensitive pyrophosphate-energized proton pump (775 aa).

5 helical membrane passes run 9-29, 65-85, 108-128, 160-180, and 185-205; these read SLAV…AFFI, ISIL…IIPP, AVAF…GMNV, MLTV…FGIA, and LLGF…GGGI. Residue lysine 208 participates in substrate binding. Mg(2+) contacts are provided by aspartate 211, aspartate 215, and aspartate 241. Transmembrane regions (helical) follow at residues 259 to 279, 288 to 308, 327 to 347, 359 to 379, 413 to 433, and 442 to 462; these read VTLV…VGTI, FIIF…IGNL, FYIA…VFMV, FFAT…TEYF, SVWA…IYAG, and AILY…GNTI. Residue aspartate 472 participates in Mg(2+) binding. 4 helical membrane-spanning segments follow: residues 508–528, 555–575, 622–642, and 644–664; these read IAIG…FTDV, PVFI…ALTI, LISL…TLGV, and ALGG…VFQA. Ca(2+) is bound by residues aspartate 671, aspartate 697, and aspartate 701. Residue lysine 704 participates in substrate binding. 2 consecutive transmembrane segments (helical) span residues 710–730 and 735–755; these read ALNP…PIVV and GSPG…WAIW.

This sequence belongs to the H(+)-translocating pyrophosphatase (TC 3.A.10) family. K(+)-insensitive subfamily. In terms of assembly, homodimer. Mg(2+) is required as a cofactor.

The protein localises to the cell membrane. The enzyme catalyses diphosphate + H2O + H(+)(in) = 2 phosphate + 2 H(+)(out). In terms of biological role, proton pump that utilizes the energy of pyrophosphate hydrolysis as the driving force for proton movement across the membrane. Generates a proton motive force. The protein is K(+)-insensitive pyrophosphate-energized proton pump of Chloroflexus aurantiacus (strain ATCC 29366 / DSM 635 / J-10-fl).